The primary structure comprises 173 residues: Flavodoxin 2 (173 aa).

The Flavodoxin-like domain occupies 3–165 (MGLFYGSSTC…RIQTWCEQIL (163 aa)).

The protein belongs to the flavodoxin family. Requires FMN as cofactor.

Its function is as follows. Low-potential electron donor to a number of redox enzymes. The protein is Flavodoxin 2 (fldB) of Salmonella typhi.